Reading from the N-terminus, the 425-residue chain is Serine--tRNA ligase (425 aa).

Residue 230-232 coordinates L-serine; the sequence is TAE. An ATP-binding site is contributed by 261 to 263; it reads RSE. Residue Glu-284 coordinates L-serine. 348 to 351 lines the ATP pocket; that stretch reads EISS. Residue Ser-383 coordinates L-serine.

This sequence belongs to the class-II aminoacyl-tRNA synthetase family. Type-1 seryl-tRNA synthetase subfamily. Homodimer. The tRNA molecule binds across the dimer.

It localises to the cytoplasm. The enzyme catalyses tRNA(Ser) + L-serine + ATP = L-seryl-tRNA(Ser) + AMP + diphosphate + H(+). It carries out the reaction tRNA(Sec) + L-serine + ATP = L-seryl-tRNA(Sec) + AMP + diphosphate + H(+). It participates in aminoacyl-tRNA biosynthesis; selenocysteinyl-tRNA(Sec) biosynthesis; L-seryl-tRNA(Sec) from L-serine and tRNA(Sec): step 1/1. In terms of biological role, catalyzes the attachment of serine to tRNA(Ser). Is also able to aminoacylate tRNA(Sec) with serine, to form the misacylated tRNA L-seryl-tRNA(Sec), which will be further converted into selenocysteinyl-tRNA(Sec). In Ligilactobacillus salivarius (strain UCC118) (Lactobacillus salivarius), this protein is Serine--tRNA ligase.